Here is a 695-residue protein sequence, read N- to C-terminus: HIPL1 protein (695 aa).

The N-terminal stretch at 1 to 23 (MKLHQFLVFLFLFLSCFALSSWA) is a signal peptide. N-linked (GlcNAc...) asparagine glycans are attached at residues asparagine 37, asparagine 67, asparagine 107, asparagine 113, asparagine 128, asparagine 151, asparagine 175, asparagine 190, asparagine 208, asparagine 337, asparagine 429, asparagine 511, asparagine 527, asparagine 641, and asparagine 648. Serine 665 is lipidated: GPI-anchor amidated serine. Residues 666–695 (SSCYKHINGFHGSLVVLFVSLSLILLGLLN) constitute a propeptide, removed in mature form.

It belongs to the PQQ oxidoreductase GdhB family. It depends on pyrroloquinoline quinone as a cofactor.

The protein resides in the cell membrane. The sequence is that of HIPL1 protein (HIPL1) from Arabidopsis thaliana (Mouse-ear cress).